We begin with the raw amino-acid sequence, 342 residues long: S-adenosylmethionine:tRNA ribosyltransferase-isomerase (342 aa).

The protein belongs to the QueA family. As to quaternary structure, monomer.

The protein resides in the cytoplasm. The enzyme catalyses 7-aminomethyl-7-carbaguanosine(34) in tRNA + S-adenosyl-L-methionine = epoxyqueuosine(34) in tRNA + adenine + L-methionine + 2 H(+). The protein operates within tRNA modification; tRNA-queuosine biosynthesis. Functionally, transfers and isomerizes the ribose moiety from AdoMet to the 7-aminomethyl group of 7-deazaguanine (preQ1-tRNA) to give epoxyqueuosine (oQ-tRNA). This is S-adenosylmethionine:tRNA ribosyltransferase-isomerase from Moorella thermoacetica (strain ATCC 39073 / JCM 9320).